The primary structure comprises 344 residues: GTP 3',8-cyclase (344 aa).

One can recognise a Radical SAM core domain in the interval 19–245 (PFGRAVTYLR…DIPYRTGGPA (227 aa)). Position 28 (Arg28) interacts with GTP. Cys35 and Cys39 together coordinate [4Fe-4S] cluster. Tyr41 is an S-adenosyl-L-methionine binding site. Cys42 lines the [4Fe-4S] cluster pocket. Residue Arg77 participates in GTP binding. Gly81 serves as a coordination point for S-adenosyl-L-methionine. Thr111 is a GTP binding site. Ser135 contacts S-adenosyl-L-methionine. Lys171 is a binding site for GTP. Residue Met205 participates in S-adenosyl-L-methionine binding. The [4Fe-4S] cluster site is built by Cys268 and Cys271. 273–275 (RVR) contributes to the GTP binding site. Cys285 is a [4Fe-4S] cluster binding site.

This sequence belongs to the radical SAM superfamily. MoaA family. Monomer and homodimer. [4Fe-4S] cluster serves as cofactor.

It carries out the reaction GTP + AH2 + S-adenosyl-L-methionine = (8S)-3',8-cyclo-7,8-dihydroguanosine 5'-triphosphate + 5'-deoxyadenosine + L-methionine + A + H(+). It participates in cofactor biosynthesis; molybdopterin biosynthesis. Functionally, catalyzes the cyclization of GTP to (8S)-3',8-cyclo-7,8-dihydroguanosine 5'-triphosphate. The protein is GTP 3',8-cyclase of Brucella ovis (strain ATCC 25840 / 63/290 / NCTC 10512).